The sequence spans 284 residues: MKRLPAVAGSFYESDPKKLKMQIEWSFRHNIGPRDIPKQTYEKKKRDNLFFVVPHAGYIYSGPVAAHSYYYLVSEGRPDVVIILGPNHTGLGSYVSAWPKGEWETPLGSVKIDEEILMQLVKESEVIDLDEKSHLYEHSIEVQLPFLQHFFDDDFKIVPIVIMMQTPEIAEFLADAIYNVMQKNPDKDIVVLASSDMNHYDPHEITVKKDVEAIEKIQQLDYKGLYEVVEGKDVTLCGYGPIMVNLILAKKFGKKAYILKHATSGDTSGPKDSVVGYLAARFGS.

The protein belongs to the MEMO1 family.

In Saccharolobus islandicus (strain Y.G.57.14 / Yellowstone #1) (Sulfolobus islandicus), this protein is MEMO1 family protein YG5714_2180.